The following is a 146-amino-acid chain: Arginine repressor (146 aa).

This sequence belongs to the ArgR family.

The protein localises to the cytoplasm. It functions in the pathway amino-acid biosynthesis; L-arginine biosynthesis [regulation]. Its function is as follows. Regulates arginine biosynthesis genes. The sequence is that of Arginine repressor from Parabacteroides distasonis (strain ATCC 8503 / DSM 20701 / CIP 104284 / JCM 5825 / NCTC 11152).